A 469-amino-acid polypeptide reads, in one-letter code: Neuraminidase (469 aa).

Residues 1–6 (MNPNQK) lie on the Intravirion side of the membrane. A helical transmembrane segment spans residues 7-27 (IITIGSICMVVGIISLILQIG). Residues 11–33 (GSICMVVGIISLILQIGNIISIW) are involved in apical transport and lipid raft association. The Virion surface segment spans residues 28 to 469 (NIISIWISHS…GAELPFTIDK (442 aa)). Residues 36–90 (HSIQTGSQNHTGICNQSIITYKNSTWVNQTYVNISNTNVVAGKGTTPVILAGNSS) form a hypervariable stalk region region. 6 N-linked (GlcNAc...) asparagine; by host glycosylation sites follow: Asn-44, Asn-50, Asn-58, Asn-63, Asn-68, and Asn-88. A head of neuraminidase region spans residues 91-469 (LCPIRGWAIY…GAELPFTIDK (379 aa)). 8 cysteine pairs are disulfide-bonded: Cys-92–Cys-417, Cys-124–Cys-129, Cys-184–Cys-231, Cys-233–Cys-238, Cys-279–Cys-292, Cys-281–Cys-290, Cys-318–Cys-335, and Cys-421–Cys-446. Residue Arg-118 coordinates substrate. Asn-146 carries N-linked (GlcNAc...) asparagine; by host glycosylation. The active-site Proton donor/acceptor is Asp-151. Arg-152 lines the substrate pocket. A glycan (N-linked (GlcNAc...) asparagine; by host) is linked at Asn-235. 277-278 (EE) provides a ligand contact to substrate. Residue Arg-293 coordinates substrate. Positions 294, 298, 324, and 344 each coordinate Ca(2+). N-linked (GlcNAc...) asparagine; by host glycosylation occurs at Asn-365. Arg-368 is a binding site for substrate. The active-site Nucleophile is the Tyr-402.

This sequence belongs to the glycosyl hydrolase 34 family. As to quaternary structure, homotetramer. Requires Ca(2+) as cofactor. In terms of processing, N-glycosylated.

Its subcellular location is the virion membrane. The protein localises to the host apical cell membrane. The enzyme catalyses Hydrolysis of alpha-(2-&gt;3)-, alpha-(2-&gt;6)-, alpha-(2-&gt;8)- glycosidic linkages of terminal sialic acid residues in oligosaccharides, glycoproteins, glycolipids, colominic acid and synthetic substrates.. With respect to regulation, inhibited by the neuraminidase inhibitors zanamivir (Relenza) and oseltamivir (Tamiflu). These drugs interfere with the release of progeny virus from infected cells and are effective against all influenza strains. Resistance to neuraminidase inhibitors is quite rare. In terms of biological role, catalyzes the removal of terminal sialic acid residues from viral and cellular glycoconjugates. Cleaves off the terminal sialic acids on the glycosylated HA during virus budding to facilitate virus release. Additionally helps virus spread through the circulation by further removing sialic acids from the cell surface. These cleavages prevent self-aggregation and ensure the efficient spread of the progeny virus from cell to cell. Otherwise, infection would be limited to one round of replication. Described as a receptor-destroying enzyme because it cleaves a terminal sialic acid from the cellular receptors. May facilitate viral invasion of the upper airways by cleaving the sialic acid moieties on the mucin of the airway epithelial cells. Likely to plays a role in the budding process through its association with lipid rafts during intracellular transport. May additionally display a raft-association independent effect on budding. Plays a role in the determination of host range restriction on replication and virulence. Sialidase activity in late endosome/lysosome traffic seems to enhance virus replication. The sequence is that of Neuraminidase from Influenza A virus (strain A/USA:Huston/AA/1945 H1N1).